A 492-amino-acid chain; its full sequence is Glycylpeptide N-tetradecanoyltransferase 2 (492 aa).

Positions 1 to 77 are disordered; it reads MAEDSESAAS…SASDSQEIKN (77 aa). Acidic residues predominate over residues 15 to 32; the sequence is ELDDQDTCGIDGDNEEEN. The segment covering 46-57 has biased composition (basic residues); that stretch reads KKKKKKQKRKKE. A compositionally biased stretch (polar residues) spans 61-72; the sequence is SGGTKSDSASDS. Tetradecanoyl-CoA is bound by residues histidine 111, tryptophan 116, leucine 244, valine 246, serine 252, arginine 254, valine 255, and alanine 256.

The protein belongs to the NMT family.

The protein localises to the cytoplasm. Its subcellular location is the membrane. It carries out the reaction N-terminal glycyl-[protein] + tetradecanoyl-CoA = N-tetradecanoylglycyl-[protein] + CoA + H(+). The enzyme catalyses N-terminal glycyl-L-lysyl-[protein] + tetradecanoyl-CoA = N-terminal glycyl-(N(6)-tetradecanoyl)-L-lysyl-[protein] + CoA + H(+). Its function is as follows. Adds a myristoyl group to the N-terminal glycine residue of certain cellular and viral proteins. Also able to mediate N-terminal lysine myristoylation of proteins. The sequence is that of Glycylpeptide N-tetradecanoyltransferase 2 from Danio rerio (Zebrafish).